The sequence spans 341 residues: MAEFWTSYLWPLLVVIGQSLLLLILLLITIAYILLADRKIWAAVQIRRGPNVVGPWGLLQSFADLLKFVFKEPMIPSGANKGVFLLAPLVSCVLALAAWAVIPVNAGWVIADINVGVLYILAVSSLSVYGIIMAGWSSNSKYPFLAALRSAAQMVSYEVSIGFVIIAVLLCVGSLNLTAIVEAQNTKWGLLGWYWLPLFPVFVIFYVSALAETNRPPFDLVEAESELVAGFMVEYASTPYLLFMLGEYVAITTMCAMGAILFLGGWLPPVPYAPFTWVPGIIWFMLKGFFMFFLFAMAKAIVPRYRYDQLMRLGWKVFLPLSLVMVVIVAGVLQFAGLAPQ.

The next 8 membrane-spanning stretches (helical) occupy residues 13–33 (LVVI…IAYI), 82–102 (GVFL…WAVI), 115–135 (VGVL…IMAG), 161–181 (IGFV…TAIV), 190–210 (LLGW…VSAL), 248–268 (YVAI…GWLP), 277–297 (WVPG…LFAM), and 317–337 (VFLP…QFAG).

It belongs to the complex I subunit 1 family. In terms of assembly, NDH-1 is composed of 14 different subunits. Subunits NuoA, H, J, K, L, M, N constitute the membrane sector of the complex.

Its subcellular location is the cell inner membrane. It carries out the reaction a quinone + NADH + 5 H(+)(in) = a quinol + NAD(+) + 4 H(+)(out). Functionally, NDH-1 shuttles electrons from NADH, via FMN and iron-sulfur (Fe-S) centers, to quinones in the respiratory chain. The immediate electron acceptor for the enzyme in this species is believed to be ubiquinone. Couples the redox reaction to proton translocation (for every two electrons transferred, four hydrogen ions are translocated across the cytoplasmic membrane), and thus conserves the redox energy in a proton gradient. This subunit may bind ubiquinone. The polypeptide is NADH-quinone oxidoreductase subunit H 1 (Rhodopseudomonas palustris (strain BisB18)).